A 308-amino-acid polypeptide reads, in one-letter code: Mitochondrial import receptor subunit TOM40B (308 aa).

The disordered stretch occupies residues 1-29 (MGNTLGLAPMGTLPRRSHRREEPLPNPGS). The interval 281–308 (PLPVTLALGAFLNHWRNRFHCGFSITVG) is required for mitochondrial targeting.

Belongs to the Tom40 family. In terms of assembly, forms part of the preprotein translocase of the outer mitochondrial membrane (TOM complex) containing TOMM22, TOMM40, TOMM40L and TOMM70. Interacts with mitochondrial targeting sequences.

The protein localises to the mitochondrion outer membrane. In terms of biological role, potential channel-forming protein implicated in import of protein precursors into mitochondria. In Mus musculus (Mouse), this protein is Mitochondrial import receptor subunit TOM40B (Tomm40l).